Consider the following 381-residue polypeptide: Cytochrome b (381 aa).

4 helical membrane passes run 33 to 53 (FGSL…FLAM), 77 to 98 (WLIR…FLHV), 113 to 133 (WNIG…GYVL), and 178 to 198 (FFAL…VHLT). Positions 83 and 97 each coordinate heme b. Residues histidine 182 and histidine 196 each contribute to the heme b site. Histidine 201 serves as a coordination point for a ubiquinone. The next 4 helical transmembrane spans lie at 226–246 (IKDI…ALFS), 288–308 (LGGV…PFLH), 320–340 (ISQT…WIGG), and 347–367 (FIII…HPMP).

The protein belongs to the cytochrome b family. The cytochrome bc1 complex contains 11 subunits: 3 respiratory subunits (MT-CYB, CYC1 and UQCRFS1), 2 core proteins (UQCRC1 and UQCRC2) and 6 low-molecular weight proteins (UQCRH/QCR6, UQCRB/QCR7, UQCRQ/QCR8, UQCR10/QCR9, UQCR11/QCR10 and a cleavage product of UQCRFS1). This cytochrome bc1 complex then forms a dimer. It depends on heme b as a cofactor.

It is found in the mitochondrion inner membrane. Functionally, component of the ubiquinol-cytochrome c reductase complex (complex III or cytochrome b-c1 complex) that is part of the mitochondrial respiratory chain. The b-c1 complex mediates electron transfer from ubiquinol to cytochrome c. Contributes to the generation of a proton gradient across the mitochondrial membrane that is then used for ATP synthesis. This is Cytochrome b (MT-CYB) from Sminthopsis youngsoni (Lesser hairy-footed dunnart).